We begin with the raw amino-acid sequence, 102 residues long: Mitochondrial import inner membrane translocase subunit Tim10 B (102 aa).

The Twin CX3C motif signature appears at cysteine 27–cysteine 51. Disulfide bonds link cysteine 27–cysteine 51 and cysteine 31–cysteine 47.

Component of the TIM22 complex, which core is composed of TIMM22, associated with TIMM10 (TIMM10A and/or TIMM10B), TIMM9, AGK and TIMM29.

The protein localises to the mitochondrion inner membrane. Functionally, component of the TIM22 complex, a complex that mediates the import and insertion of multi-pass transmembrane proteins into the mitochondrial inner membrane. The TIM22 complex forms a twin-pore translocase that uses the membrane potential as the external driving force. In the TIM22 complex, it may act as a docking point for the soluble 70 kDa complex that guides the target proteins in transit through the aqueous mitochondrial intermembrane space. The polypeptide is Mitochondrial import inner membrane translocase subunit Tim10 B (TIMM10B) (Pongo abelii (Sumatran orangutan)).